We begin with the raw amino-acid sequence, 202 residues long: Large ribosomal subunit protein bL25 (202 aa).

The interval 180 to 202 (PKQEAFEEDAEPSPGEEPEGENQ) is disordered. Residues 185-202 (FEEDAEPSPGEEPEGENQ) show a composition bias toward acidic residues.

This sequence belongs to the bacterial ribosomal protein bL25 family. CTC subfamily. Part of the 50S ribosomal subunit; part of the 5S rRNA/L5/L18/L25 subcomplex. Contacts the 5S rRNA. Binds to the 5S rRNA independently of L5 and L18.

This is one of the proteins that binds to the 5S RNA in the ribosome where it forms part of the central protuberance. The chain is Large ribosomal subunit protein bL25 from Bacillus velezensis (strain DSM 23117 / BGSC 10A6 / LMG 26770 / FZB42) (Bacillus amyloliquefaciens subsp. plantarum).